Reading from the N-terminus, the 2067-residue chain is Lipoxygenase homology domain-containing protein 1 (2067 aa).

PLAT domains are found at residues 43 to 160, 172 to 287, 296 to 412, 425 to 540, 553 to 673, 684 to 803, 814 to 934, 969 to 1087, 1100 to 1225, 1254 to 1372, 1421 to 1539, 1552 to 1667, 1679 to 1797, 1810 to 1931, and 1948 to 2064; these read RVYE…RDLL, NKYE…RDIL, ITYI…RQLY, FPWS…REMT, ARYH…RELL, FRYH…VELY, VHYE…RELL, TTFS…RDLF, VPYE…RELV, VLYS…RLFY, IPYY…RVFD, VLYE…CEMC, TSYT…RDFA, TTYE…VFEV, and VKYE…RDLF.

It is found in the cell projection. The protein resides in the stereocilium. Its function is as follows. Involved in hearing. Required for normal function of hair cells in the inner ear. This chain is Lipoxygenase homology domain-containing protein 1 (LOXHD1), found in Homo sapiens (Human).